The sequence spans 488 residues: MALLCLDGVFLSSAENDFVHRVQEELDRFLLQKQLSKVLLFPPVSSRLRYLIHRTAENFDLLSSFSVGEGWKRRTVICHLDIRVPSSDGPSGPCRPPASHPSKYRGPRYTSHQGAAAGPRGAPAGRWHRGRKPDQPLYVPRVLRRQGGPVAASIPGIKGEDPAGAVSEEEPREAGAGDAEADQGIAMLVTQELLKSPDPGHANEPQMGLGDTEPSENPEKEQGAETAVQQGSGAQLAMEEENRSHGMRSLVDQEEEEIEGEEEEKVDEKEEDTGKQKERVDEEEEKTDAQEGKVDSEGERMDEGEDKVDAEEEDEDEADADHGDFSELLQEITANLTEKEIKIEKIHLDTSAFTEELPGERDLTHLVEIYDFKPTLKTEDLLATFSEFQEKGFRIQWVDDTHAIGIFPCPASALEALAKDFSVLKIRPLTQGTKQSKLKALQRPKFLRLSKERPQTDSAVARRLVARALGLQHNRKKELPTPPSVLPS.

The R3H domain maps to 16–81 (NDFVHRVQEE…KRRTVICHLD (66 aa)). 2 disordered regions span residues 87-180 (SDGP…GDAE) and 195-322 (KSPD…DADH). The span at 114-125 (GAAAGPRGAPAG) shows a compositional bias: low complexity. Position 232 is a phosphoserine (Ser232). Residues 244 to 321 (SHGMRSLVDQ…EEDEDEADAD (78 aa)) are a coiled coil. Acidic residues predominate over residues 252–265 (DQEEEEIEGEEEEK). Composition is skewed to basic and acidic residues over residues 266-280 (VDEKEEDTGKQKERV) and 287-301 (TDAQEGKVDSEGERM). The span at 302–319 (DEGEDKVDAEEEDEDEAD) shows a compositional bias: acidic residues.

The chain is R3H and coiled-coil domain-containing protein 1 from Mus musculus (Mouse).